Reading from the N-terminus, the 347-residue chain is Probable arabinogalactan endo-beta-1,4-galactanase A (347 aa).

The N-terminal stretch at 1–16 (MLFSYLLATLPLLANA) is a signal peptide. Glutamate 150 serves as the catalytic Proton donor. The active-site Nucleophile is glutamate 260.

This sequence belongs to the glycosyl hydrolase 53 family.

It is found in the secreted. It carries out the reaction The enzyme specifically hydrolyzes (1-&gt;4)-beta-D-galactosidic linkages in type I arabinogalactans.. Its function is as follows. Endogalactanase involved in the degradation of plant cell wall polysaccharides, and more particularly of hairy regions of pectin. The protein is Probable arabinogalactan endo-beta-1,4-galactanase A (galA) of Aspergillus flavus (strain ATCC 200026 / FGSC A1120 / IAM 13836 / NRRL 3357 / JCM 12722 / SRRC 167).